A 533-amino-acid chain; its full sequence is Retinoid isomerohydrolase (533 aa).

Cysteine 112 is lipidated: S-palmitoyl cysteine; in membrane form. A Phosphoserine modification is found at serine 117. Histidine 180 lines the Fe cation pocket. Cysteine 231 is lipidated: S-palmitoyl cysteine; in membrane form. Histidine 241 and histidine 313 together coordinate Fe cation. Cysteine 329 is lipidated: S-palmitoyl cysteine; in membrane form. Histidine 527 contributes to the Fe cation binding site.

This sequence belongs to the carotenoid oxygenase family. The cofactor is Fe(2+). Palmitoylation by LRAT regulates ligand binding specificity; the palmitoylated form (membrane form) specifically binds all-trans-retinyl-palmitate, while the soluble unpalmitoylated form binds all-trans-retinol (vitamin A). Retinal pigment epithelium specific.

Its subcellular location is the cytoplasm. It localises to the cell membrane. The protein localises to the microsome membrane. The enzyme catalyses an all-trans-retinyl ester + H2O = 11-cis-retinol + a fatty acid + H(+). It catalyses the reaction lutein = (3R,3'S)-zeaxanthin. It carries out the reaction all-trans-retinyl hexadecanoate + H2O = 11-cis-retinol + hexadecanoate + H(+). In terms of biological role, critical isomerohydrolase in the retinoid cycle involved in regeneration of 11-cis-retinal, the chromophore of rod and cone opsins. Catalyzes the cleavage and isomerization of all-trans-retinyl fatty acid esters to 11-cis-retinol which is further oxidized by 11-cis retinol dehydrogenase to 11-cis-retinal for use as visual chromophore. Essential for the production of 11-cis retinal for both rod and cone photoreceptors. Also capable of catalyzing the isomerization of lutein to meso-zeaxanthin an eye-specific carotenoid. The soluble form binds vitamin A (all-trans-retinol), making it available for LRAT processing to all-trans-retinyl ester. The membrane form, palmitoylated by LRAT, binds all-trans-retinyl esters, making them available for IMH (isomerohydrolase) processing to all-cis-retinol. The soluble form is regenerated by transferring its palmitoyl groups onto 11-cis-retinol, a reaction catalyzed by LRAT. The sequence is that of Retinoid isomerohydrolase (RPE65) from Gallus gallus (Chicken).